Here is a 360-residue protein sequence, read N- to C-terminus: DNA replication and repair protein RecF (360 aa).

33 to 40 (GENGSGKT) serves as a coordination point for ATP.

Belongs to the RecF family.

Its subcellular location is the cytoplasm. Functionally, the RecF protein is involved in DNA metabolism; it is required for DNA replication and normal SOS inducibility. RecF binds preferentially to single-stranded, linear DNA. It also seems to bind ATP. In Rickettsia akari (strain Hartford), this protein is DNA replication and repair protein RecF.